The sequence spans 391 residues: Zinc finger protein DPF3 (391 aa).

Over residues 152–165 (ENGDGFHDDEDFEV) the composition is skewed to acidic residues. 2 disordered regions span residues 152 to 200 (ENGD…PYVC) and 236 to 266 (LAEEEGEEERETEIPQSPPVHHENHKPQKAP). The segment covering 169–183 (KRKHRNKGRGRGSGR) has biased composition (basic residues). The segment at 198–235 (YVCDNRYKQKHNSKTADSVCGKRYKNRPGLSYHYAHTH) adopts a C2H2-type zinc-finger fold. 2 consecutive PHD-type zinc fingers follow at residues 273 to 333 (NDYC…CKSC) and 330 to 380 (CKSC…CQNL).

As to quaternary structure, component of the BAF complex. Interacts with acetylated histones H3 and H4. Component of neuron-specific chromatin remodeling complex (nBAF complex), a subfamily of ATP-dependent SWI/SNF chromatin remodeling complexes. In terms of tissue distribution, expressed in the heart and somites.

It is found in the nucleus. Functionally, muscle-specific component of the BAF complex, a multiprotein complex involved in transcriptional activation and repression of select genes by chromatin remodeling (alteration of DNA-nucleosome topology). Specifically binds acetylated lysines on histone 3 and 4. In the complex, it acts as a tissue-specific anchor between histone acetylations and methylations and chromatin remodeling. Belongs to the neuron-specific chromatin remodeling complex (nBAF complex) and may play a role in neural development. Plays an essential role in heart and skeletal muscle development. The protein is Zinc finger protein DPF3 (dpf3) of Danio rerio (Zebrafish).